The chain runs to 197 residues: MFEYLNGKLVKISPTNIVIDLSGIGYLISVANPYAWSALMNTEVKIYVHQVIREDAHSLYGFVNESEKALFLRLISVSGIGPKSALAIIAAADNEGLINAIDNSDIKYLTKFPGVGKKTAMQMVLDLAGKFDATGAVGISLLDAAPASNLALEEAIEALQALGYKATELKKIEKKLAQEAGLTSEEYIKSALKLMMK.

Positions Met-1–Val-63 are domain I. Positions Asn-64–Leu-142 are domain II. Residues Leu-142–Pro-146 are flexible linker. Residues Ala-147 to Lys-197 form a domain III region.

This sequence belongs to the RuvA family. Homotetramer. Forms an RuvA(8)-RuvB(12)-Holliday junction (HJ) complex. HJ DNA is sandwiched between 2 RuvA tetramers; dsDNA enters through RuvA and exits via RuvB. An RuvB hexamer assembles on each DNA strand where it exits the tetramer. Each RuvB hexamer is contacted by two RuvA subunits (via domain III) on 2 adjacent RuvB subunits; this complex drives branch migration. In the full resolvosome a probable DNA-RuvA(4)-RuvB(12)-RuvC(2) complex forms which resolves the HJ.

It is found in the cytoplasm. In terms of biological role, the RuvA-RuvB-RuvC complex processes Holliday junction (HJ) DNA during genetic recombination and DNA repair, while the RuvA-RuvB complex plays an important role in the rescue of blocked DNA replication forks via replication fork reversal (RFR). RuvA specifically binds to HJ cruciform DNA, conferring on it an open structure. The RuvB hexamer acts as an ATP-dependent pump, pulling dsDNA into and through the RuvAB complex. HJ branch migration allows RuvC to scan DNA until it finds its consensus sequence, where it cleaves and resolves the cruciform DNA. This is Holliday junction branch migration complex subunit RuvA from Lactococcus lactis subsp. cremoris (strain MG1363).